The following is a 404-amino-acid chain: Rhomboid-related protein 3 (404 aa).

EF-hand domains are found at residues 34-69 (APED…HSSK) and 70-105 (LDPH…KRSN). Transmembrane regions (helical) follow at residues 164 to 184 (WFMI…GVLL), 227 to 247 (LGLN…VHGA), 250 to 270 (IGLV…VADM), 274 to 294 (VVGS…NIVM), 305 to 324 (LLRM…RAVW), 338 to 358 (PSFV…VVVL), and 371 to 391 (WWIF…WNIF). Ser-278 functions as the Nucleophile in the catalytic mechanism. The active site involves His-343.

Belongs to the peptidase S54 family.

The protein resides in the membrane. It catalyses the reaction Cleaves type-1 transmembrane domains using a catalytic dyad composed of serine and histidine that are contributed by different transmembrane domains.. Functionally, may be involved in regulated intramembrane proteolysis and the subsequent release of functional polypeptides from their membrane anchors. This is Rhomboid-related protein 3 (Rhbdl3) from Mus musculus (Mouse).